The chain runs to 365 residues: Aminomethyltransferase (365 aa).

This sequence belongs to the GcvT family. In terms of assembly, the glycine cleavage system is composed of four proteins: P, T, L and H.

It carries out the reaction N(6)-[(R)-S(8)-aminomethyldihydrolipoyl]-L-lysyl-[protein] + (6S)-5,6,7,8-tetrahydrofolate = N(6)-[(R)-dihydrolipoyl]-L-lysyl-[protein] + (6R)-5,10-methylene-5,6,7,8-tetrahydrofolate + NH4(+). Functionally, the glycine cleavage system catalyzes the degradation of glycine. In Serratia proteamaculans (strain 568), this protein is Aminomethyltransferase.